A 271-amino-acid chain; its full sequence is Energy-coupling factor transporter ATP-binding protein EcfA (271 aa).

The ABC transporter domain occupies 2–231 (ISIQNLTFYY…PLFLQQYKLN (230 aa)). 34–41 (GHNGSGKS) provides a ligand contact to ATP.

This sequence belongs to the ABC transporter superfamily. Energy-coupling factor EcfA family. Forms a stable energy-coupling factor (ECF) transporter complex composed of 2 membrane-embedded substrate-binding proteins (S component), 2 ATP-binding proteins (A component) and 2 transmembrane proteins (T component).

It localises to the cell membrane. In terms of biological role, ATP-binding (A) component of a common energy-coupling factor (ECF) ABC-transporter complex. Unlike classic ABC transporters this ECF transporter provides the energy necessary to transport a number of different substrates. The sequence is that of Energy-coupling factor transporter ATP-binding protein EcfA from Onion yellows phytoplasma (strain OY-M).